Consider the following 600-residue polypeptide: Terpenoid synthase 8 (600 aa).

Residues D352, D356, N497, and D505 each coordinate Mg(2+). The DDXXD motif motif lies at 352–356 (DDTCD).

Belongs to the terpene synthase family. Tpsa subfamily. Mg(2+) serves as cofactor. The cofactor is Mn(2+). Stele, and tips of primary and secondary root.

Its subcellular location is the plastid. It catalyses the reaction (2E,6E,10E)-geranylgeranyl diphosphate = rhizathalene A + diphosphate. The protein operates within secondary metabolite biosynthesis; terpenoid biosynthesis. In terms of biological role, catalyzes the synthesis of the semivolatile diterpene rhizatalene A. The polypeptide is Terpenoid synthase 8 (TPS08) (Arabidopsis thaliana (Mouse-ear cress)).